A 444-amino-acid polypeptide reads, in one-letter code: Trigger factor (444 aa).

The PPIase FKBP-type domain maps to 166–251 (GDQVVIDFKG…VKAVKAPKAA (86 aa)).

This sequence belongs to the FKBP-type PPIase family. Tig subfamily.

Its subcellular location is the cytoplasm. The catalysed reaction is [protein]-peptidylproline (omega=180) = [protein]-peptidylproline (omega=0). In terms of biological role, involved in protein export. Acts as a chaperone by maintaining the newly synthesized protein in an open conformation. Functions as a peptidyl-prolyl cis-trans isomerase. The sequence is that of Trigger factor from Cereibacter sphaeroides (strain KD131 / KCTC 12085) (Rhodobacter sphaeroides).